The chain runs to 814 residues: DNA gyrase subunit A (814 aa).

Positions 32 to 499 (LPDVRDGLKP…GVIEFREEDL (468 aa)) constitute a Topo IIA-type catalytic domain. Y120 (O-(5'-phospho-DNA)-tyrosine intermediate) is an active-site residue. The GyrA-box signature appears at 526–532 (QHRAGRG).

It belongs to the type II topoisomerase GyrA/ParC subunit family. In terms of assembly, heterotetramer, composed of two GyrA and two GyrB chains. In the heterotetramer, GyrA contains the active site tyrosine that forms a transient covalent intermediate with DNA, while GyrB binds cofactors and catalyzes ATP hydrolysis.

The protein localises to the cytoplasm. The enzyme catalyses ATP-dependent breakage, passage and rejoining of double-stranded DNA.. Its function is as follows. A type II topoisomerase that negatively supercoils closed circular double-stranded (ds) DNA in an ATP-dependent manner to modulate DNA topology and maintain chromosomes in an underwound state. Negative supercoiling favors strand separation, and DNA replication, transcription, recombination and repair, all of which involve strand separation. Also able to catalyze the interconversion of other topological isomers of dsDNA rings, including catenanes and knotted rings. Type II topoisomerases break and join 2 DNA strands simultaneously in an ATP-dependent manner. This Dehalogenimonas lykanthroporepellens (strain ATCC BAA-1523 / JCM 15061 / BL-DC-9) protein is DNA gyrase subunit A.